The primary structure comprises 690 residues: Protein arginine N-methyltransferase 7 (690 aa).

SAM-dependent MTase PRMT-type domains are found at residues 14-357 (QNSW…YSLW) and 366-690 (TKSV…QKKL).

It belongs to the class I-like SAM-binding methyltransferase superfamily. Protein arginine N-methyltransferase family. PRMT7 subfamily.

Its function is as follows. Essential arginine methyltransferase that can both catalyze the formation of omega-N monomethylarginine (MMA) and symmetrical dimethylarginine (sDMA). Specifically mediates the symmetrical dimethylation of arginine residues in the small nuclear ribonucleoproteins SmD1 and SmD3. This chain is Protein arginine N-methyltransferase 7 (Art7), found in Drosophila yakuba (Fruit fly).